The sequence spans 130 residues: Small ribosomal subunit protein uS9 (130 aa).

Belongs to the universal ribosomal protein uS9 family.

This Azotobacter vinelandii (strain DJ / ATCC BAA-1303) protein is Small ribosomal subunit protein uS9.